Here is a 102-residue protein sequence, read N- to C-terminus: Large ribosomal subunit protein uL24 (102 aa).

Belongs to the universal ribosomal protein uL24 family. In terms of assembly, part of the 50S ribosomal subunit.

Its function is as follows. One of two assembly initiator proteins, it binds directly to the 5'-end of the 23S rRNA, where it nucleates assembly of the 50S subunit. Functionally, one of the proteins that surrounds the polypeptide exit tunnel on the outside of the subunit. In Ralstonia pickettii (strain 12J), this protein is Large ribosomal subunit protein uL24.